The primary structure comprises 638 residues: DNA repair protein rhp41 (638 aa).

Belongs to the XPC family.

It localises to the nucleus. Functionally, has a role in the nucleotide excision repair (NER) pathway. Acts in both transcription-coupled repair (TCR) which removes damage from the transcribed strand of active genes and in global genome repair (GGR) which removes damage in untranscribed DNA. Involved in the repair of UV-induced damages where it is involved in the removal of cyclobutane pyrimidine dimers (CPDs). This is DNA repair protein rhp41 (rhp41) from Schizosaccharomyces pombe (strain 972 / ATCC 24843) (Fission yeast).